We begin with the raw amino-acid sequence, 283 residues long: Probable aquaporin NIP4-2 (283 aa).

The residue at position 1 (methionine 1) is an N-acetylmethionine. Residues 1-21 show a composition bias toward basic and acidic residues; the sequence is MTSHGEEIEDEQISRIEKGNC. The interval 1-23 is disordered; that stretch reads MTSHGEEIEDEQISRIEKGNCKD. Helical transmembrane passes span 51-71 and 77-97; these read GTYFIIFSGCGVVVVNVLYGG and GICVTWGLIVMVMIYSTGHIS. An NPA 1 motif is present at residues 102 to 104; that stretch reads NPA. A run of 3 helical transmembrane segments spans residues 120 to 140, 161 to 181, and 189 to 209; these read VPLYIGAQLTGSLLASLTLRL, ALVAEIIISFLLMFVISGVAT, and LAGIAVGMTIILNVFVAGPIS. The NPA 2 motif lies at 214 to 216; the sequence is NPA. A helical transmembrane segment spans residues 231–251; it reads IWVYIVGPFVGIFAGGFVYNF. The residue at position 267 (serine 267) is a Phosphoserine.

The protein belongs to the MIP/aquaporin (TC 1.A.8) family. NIP (TC 1.A.8.12) subfamily.

The protein localises to the membrane. In terms of biological role, aquaporins facilitate the transport of water and small neutral solutes across cell membranes. In Arabidopsis thaliana (Mouse-ear cress), this protein is Probable aquaporin NIP4-2 (NIP4-2).